The sequence spans 249 residues: MMGKPEDLKLIDENGRRIDGRKKYELRPIKMEVGVLKNADGSAYVEWGKNKILAAVYGPREIHPKHLQRPDRAILRVRYNMAPFSVEERKKPGPDRRSVEISKVIRGALEPALILEMFPRTAIDIFIEVLQADAGTRVAGITAASLALADAGIPMRDLVAACAAGKIEGEIVLDLNKEEDNYGEADVPVAIMPLKNDITLLQMDGYLTRDEFIEAVRLAIKGAKAVYQKQREALKEKYLKIAEEVGGGE.

Belongs to the RNase PH family. Rrp41 subfamily. Component of the archaeal exosome complex. Forms a hexameric ring-like arrangement composed of 3 Rrp41-Rrp42 heterodimers. The hexameric ring associates with a trimer of Rrp4 and/or Csl4 subunits.

The protein localises to the cytoplasm. Its function is as follows. Catalytic component of the exosome, which is a complex involved in RNA degradation. Has 3'-&gt;5' exoribonuclease activity. Can also synthesize heteromeric RNA-tails. This chain is Exosome complex component Rrp41, found in Thermococcus onnurineus (strain NA1).